Here is a 463-residue protein sequence, read N- to C-terminus: Quinolone resistance protein NorB (463 aa).

14 helical membrane passes run 17 to 37 (IGIVLSVITFWLFAQSLVNVV), 53 to 73 (IAVSITALFSGMFVVGAGGLA), 86 to 106 (IILNILGSLLIIISNIPLLLI), 107 to 127 (IGRLIQGLSAACIMPATLSII), 142 to 162 (YWSIGSWGGSGVCSFFGGAVA), 165 to 185 (LGWRWIFILSIIISLIALFLI), 201 to 221 (FDIKGLVLLVIMLLSLNILIT), 230 to 250 (SLLFITILAIAIVSFSLFIVL), 273 to 293 (TASNFLLNGVAGTLIVANTFV), 299 to 319 (YSSLQAGSLSITYLVMVLIMI), 334 to 354 (PMLIGTAVLIVGECLISLTFL), 357 to 377 (ILYVICCIIGYLFFGLGLGIY), 403 to 423 (MASALGGAFGVALSGAVYAIV), and 435 to 455 (IALWLNAGMGILSFVIILLLV).

This sequence belongs to the major facilitator superfamily. TCR/Tet family.

Its subcellular location is the cell membrane. Its function is as follows. Multidrug efflux pump that acts independently of NorA and is one of the factors that confers resistance against diverse quinolones and chemical compounds. The chain is Quinolone resistance protein NorB (norB) from Staphylococcus aureus (strain MRSA252).